The chain runs to 273 residues: NAD-dependent protein deacylase (273 aa).

The Deacetylase sirtuin-type domain occupies 20-272 (RERLRQRIFF…PEFVEKLLKG (253 aa)). 48-67 (GAGISAESGIRTFRAADGLW) lines the NAD(+) pocket. Substrate is bound by residues tyrosine 92 and arginine 95. 129–132 (QNID) contacts NAD(+). Histidine 147 acts as the Proton acceptor in catalysis. Positions 155 and 174 each coordinate Zn(2+). NAD(+) is bound by residues 214-216 (GTS), 240-242 (NLE), and alanine 258.

Belongs to the sirtuin family. Class III subfamily. The cofactor is Zn(2+).

The protein resides in the cytoplasm. It carries out the reaction N(6)-acetyl-L-lysyl-[protein] + NAD(+) + H2O = 2''-O-acetyl-ADP-D-ribose + nicotinamide + L-lysyl-[protein]. It catalyses the reaction N(6)-succinyl-L-lysyl-[protein] + NAD(+) + H2O = 2''-O-succinyl-ADP-D-ribose + nicotinamide + L-lysyl-[protein]. The enzyme catalyses N(6)-(2-hydroxyisobutanoyl)-L-lysyl-[protein] + NAD(+) + H2O = 2''-O-(2-hydroxyisobutanoyl)-ADP-D-ribose + nicotinamide + L-lysyl-[protein]. Its function is as follows. NAD-dependent lysine deacetylase that specifically removes acetyl groups on target proteins. Also acts as a protein-lysine deacylase by mediating protein desuccinylation and de-2-hydroxyisobutyrylation. Modulates the activities of several proteins which are inactive in their acylated form. This is NAD-dependent protein deacylase from Escherichia coli O6:H1 (strain CFT073 / ATCC 700928 / UPEC).